We begin with the raw amino-acid sequence, 180 residues long: Putative protein 33K (180 aa).

A disordered region spans residues 31–108; the sequence is LEEAYKQLEK…AKAPRNYGTP (78 aa). Positions 33-43 are enriched in basic and acidic residues; it reads EAYKQLEKELG. Acidic residues predominate over residues 60–78; it reads PLSEGELEEISEEEEEEGE.

The protein is Putative protein 33K of Pantherophis guttatus (Corn snake).